A 527-amino-acid polypeptide reads, in one-letter code: Putative ABC transporter peptide-binding protein BOV_A0352 (527 aa).

Positions 1 to 23 are cleaved as a signal peptide; that stretch reads MRLRNFYSALALSAAVFAGPLYA.

The protein belongs to the bacterial solute-binding protein 5 family. In terms of assembly, the complex is composed of two ATP-binding proteins (BOV_A0347 and BOV_A0348), two transmembrane proteins (BOV_A0350 and BOV_A0351) and a solute-binding protein (BOV_A0352).

Its subcellular location is the periplasm. Functionally, probably part of an ABC transporter complex that could be involved in peptide import. This Brucella ovis (strain ATCC 25840 / 63/290 / NCTC 10512) protein is Putative ABC transporter peptide-binding protein BOV_A0352.